The following is a 444-amino-acid chain: Viral protein kinase (444 aa).

A disordered region spans residues 1–25 (MRWKRMERRPPLTPLRRSRTQSSGG). Residues 90-98 (LGRGAFGII) and Lys108 contribute to the ATP site. The Proton acceptor role is filled by Asp201.

In terms of assembly, interacts with protein K-bZIP/K8. Interacts with host beta-catenin/CTNNB1. In terms of processing, AUtophosphorylated.

Its subcellular location is the host nucleus. It catalyses the reaction L-seryl-[protein] + ATP = O-phospho-L-seryl-[protein] + ADP + H(+). It carries out the reaction L-threonyl-[protein] + ATP = O-phospho-L-threonyl-[protein] + ADP + H(+). Serine/threonine protein kinase that plays a role in viral gene expression, viral DNA replication and encapsidation, and nuclear egress of virions. Regulates host transcriptional activity through interactions with RNA helicase and c-Jun N-terminal kinase (JNK) and viral transcriptional activity through interactions with the viral protein K-bZIP/K8. Induces host chromosome condensation and phosphorylation of histone H3. Phosphorylates the DNA polymerase processivity factor hence modulating its processivity function. Inhibits the host Wnt signaling pathway via direct interactions with beta-catenin/CTNNB1 while the kinase activity of vPK is not required for this inhibitory activity. Also phosphorylates host SAMHD1 and thereby counteracts its antiviral effect by reducing its dNTP hydrolase activity. The protein is Viral protein kinase (vPK) of Human herpesvirus 8 type P (isolate GK18) (HHV-8).